A 187-amino-acid chain; its full sequence is Early E3 20.6 kDa glycoprotein (187 aa).

Residues N30, N73, N117, N134, and N135 are each glycosylated (N-linked (GlcNAc...) asparagine; by host).

This sequence belongs to the adenoviridae E3_20 family.

The chain is Early E3 20.6 kDa glycoprotein from Human adenovirus B serotype 11 (strain Slobiski) (HAdV-11).